A 500-amino-acid chain; its full sequence is MAPSGGQEAQICDSETFGDSDFVVVANRLPVDLERLPDGSTTWKRSPGGLVTALEPVLRRRRGAWVGWPGVNDDGAEPDLHVLDGPIIQDELELHPVRLSTTDIAQYYEGFSNATLWPLYHDVIVKPLYHREWWDRYVDVNQRFAEAASRAAAHGATVWVQDYQLQLVPKMLRMLRPDLTIGFFLHIPFPPVELFMQMPWRTEIIQGLLGADLVGFHLPGGAQNFLILSRRLVGTDTSRGTVGVRSRFGAAVLGSRTIRVGAFPISVDSGALDHAARDRNIRRRAREIRTELGNPRKILLGVDRLDYTKGIDVRLKAFSELLAEGRVKRDDTVVVQLATPSRERVESYQTLRNDIERQVGHINGEYGEVGHPVVHYLHRPAPRDELIAFFVASDVMLVTPLRDGMNLVAKEYVACRSDLGGALVLSEFTGAAAELRHAYLVNPHDLEGVKDGIEEALNQTEEAGRRRMRSLRRQVLAHDVDRWAQSFLDALAGAHPRGQG.

Arg-28 contributes to the D-glucose 6-phosphate binding site. Residue 48 to 49 (GG) coordinates UDP-alpha-D-glucose. The D-glucose 6-phosphate site is built by Tyr-108 and Asp-162. Arg-304 and Lys-309 together coordinate UDP-alpha-D-glucose. Arg-342 provides a ligand contact to D-glucose 6-phosphate. Residue 407–411 (LVAKE) coordinates UDP-alpha-D-glucose.

It belongs to the glycosyltransferase 20 family. Homotetramer.

The catalysed reaction is ADP-alpha-D-glucose + D-glucose 6-phosphate = alpha,alpha-trehalose 6-phosphate + ADP + H(+). The enzyme catalyses CDP-alpha-D-glucose + D-glucose 6-phosphate = alpha,alpha-trehalose 6-phosphate + CDP + H(+). It carries out the reaction GDP-alpha-D-glucose + D-glucose 6-phosphate = alpha,alpha-trehalose 6-phosphate + GDP + H(+). It catalyses the reaction TDP-alpha-D-glucose + D-glucose 6-phosphate = 5-methyl-UDP + alpha,alpha-trehalose 6-phosphate + H(+). The catalysed reaction is D-glucose 6-phosphate + UDP-alpha-D-glucose = alpha,alpha-trehalose 6-phosphate + UDP + H(+). The protein operates within glycan biosynthesis; trehalose biosynthesis. In terms of biological role, probably involved in the osmoprotection via the biosynthesis of trehalose and in the production of glycogen and alpha-glucan via the TreS-Pep2 branch involved in the biosynthesis of maltose-1-phosphate (M1P). Catalyzes the transfer of glucose from UDP-glucose (UDP-Glc) to D-glucose 6-phosphate (Glc-6-P) to form trehalose-6-phosphate. Probably also able to use ADP-Glc, CDP-Glc, GDP-Glc and TDP-Glc as glucosyl donors. The protein is Trehalose-6-phosphate synthase of Mycobacterium tuberculosis (strain CDC 1551 / Oshkosh).